A 434-amino-acid polypeptide reads, in one-letter code: Forkhead box protein A2 (434 aa).

Positions 149–243 form a DNA-binding region, fork-head; sequence KPPYSYISLI…ENGCYLRRQK (95 aa). The span at 249–262 shows a compositional bias: basic and acidic residues; that stretch reads KKPSLREGGGKKLS. The segment at 249-339 is disordered; it reads KKPSLREGGG…VLSHEAQSHL (91 aa). Composition is skewed to low complexity over residues 263–291 and 317–333; these read EGSS…SSSP and ASQA…VLSH.

Its subcellular location is the nucleus. Acts as a transcriptional activator during early development, limiting the extent of mesoderm formation in the gastrula. Binds to DNA via the target sequence 5'-GT[AC]AACA-3', with 5'-GTAAACA-3' being the preferred binding site. This is Forkhead box protein A2 from Xenopus tropicalis (Western clawed frog).